A 512-amino-acid chain; its full sequence is Cytochrome P450 72A15 (512 aa).

The helical transmembrane segment at 2 to 22 (EISVASVTISVVLAVVSWWIW) threads the bilayer. C460 is a binding site for heme.

Belongs to the cytochrome P450 family. The cofactor is heme.

It is found in the membrane. In Arabidopsis thaliana (Mouse-ear cress), this protein is Cytochrome P450 72A15 (CYP72A15).